An 81-amino-acid polypeptide reads, in one-letter code: Protein Vpu (81 aa).

Topologically, residues 1-7 (MQPLGII) are extracellular. Residues 8 to 28 (AIAALVVAIILAIVVWTIVFI) traverse the membrane as a helical segment. Over 29–81 (EYRRIKKQRRIDCLLDRITERAEDSGNESEGDREKLSKLVEMGHHAPWDIDDL) the chain is Cytoplasmic. Phosphoserine; by host CK2 occurs at positions 53 and 57.

Belongs to the HIV-1 VPU protein family. Homopentamer. Interacts with host CD4 and BRTC; these interactions induce proteasomal degradation of CD4. Interacts with host BST2; this interaction leads to the degradation of host BST2. Interacts with host FBXW11. Interacts with host AP1M1; this interaction plays a role in the mistrafficking and subsequent degradation of host BST2. Interacts with host RANBP2; this interaction allows Vpu to down-regulate host BLM sumoylation. In terms of processing, phosphorylated by host CK2. This phosphorylation is necessary for interaction with human BTRC and degradation of CD4.

The protein resides in the host membrane. Ion channel activity is inhibited by hexamethylene amiloride in vitro. In terms of biological role, enhances virion budding by targeting host CD4 and Tetherin/BST2 to proteasome degradation. Degradation of CD4 prevents any unwanted premature interactions between viral Env and its host receptor CD4 in the endoplasmic reticulum. Degradation of antiretroviral protein Tetherin/BST2 is important for virion budding, as BST2 tethers new viral particles to the host cell membrane. Mechanistically, Vpu bridges either CD4 or BST2 to BTRC, a substrate recognition subunit of the Skp1/Cullin/F-box protein E3 ubiquitin ligase, induces their ubiquitination and subsequent proteasomal degradation. The alteration of the E3 ligase specificity by Vpu seems to promote the degradation of host IKBKB, leading to NF-kappa-B down-regulation and subsequent apoptosis. Acts as a viroporin that forms an oligomeric ion channel in membranes. Modulates the host DNA repair mechanisms to promote degradation of nuclear viral cDNA in cells that are already productively infected in order to suppress immune sensing and proviral hyper-integration (superinfection). Manipulates PML-NBs and modulates SUMOylation of host BLM protein thereby enhancing its DNA-end processing activity toward viral unintegrated linear DNA. Also inhibits RAD52-mediated homologous repair of viral cDNA, preventing the generation of dead-end circular forms of single copies of the long terminal repeat and permitting sustained nucleolytic attack. This Human immunodeficiency virus type 1 group M subtype D (isolate ELI) (HIV-1) protein is Protein Vpu.